We begin with the raw amino-acid sequence, 407 residues long: MLLSVTSRPGISTFGYNRNNKKPYVSLAQQMAPPSPSNSTPNSSSGSNGNDQLSKTNLYIRGLQPGTTDQDLVKLCQPYGKIVSTKAILDKTTNKCKGYGFVDFDSPSAAQKAVTALKASGVQAQMAKQQEQDPTNLYISNLPLSMDEQELEGMLKPFGQVISTRILRDTSGTSRGVGFARMESTEKCEAIITHFNGKYIKTPPGVPAPSDPLLCKFADGGPKKRQNQGKFVQNGRAWPRNADMGVMALTYDPTTALQNGFYPAPYNITPNRMLAQSALSPYLSSPVSSYQRVTQTSPLQVPNPSWMHHHSYLMQPSGSVLTPGMDHPISLQPASMMGPLTQQLGHLSLSSTGTYMPTAAAMQGAYISQYTPVPSSSVSVEESSGQQNQVAVDAPSEHGVYSFQFNK.

M1 is subject to N-acetylmethionine. Residues 29–54 (QQMAPPSPSNSTPNSSSGSNGNDQLS) are disordered. The segment covering 37 to 50 (SNSTPNSSSGSNGN) has biased composition (low complexity). 2 RRM domains span residues 56–129 (TNLY…MAKQ) and 135–220 (TNLY…FADG). A Phosphoserine modification is found at S106. T269 is modified (phosphothreonine). Phosphoserine is present on residues S280 and S285.

Its subcellular location is the nucleus. In Homo sapiens (Human), this protein is RNA-binding motif, single-stranded-interacting protein 2 (RBMS2).